The primary structure comprises 171 residues: 3-hydroxydecanoyl-[acyl-carrier-protein] dehydratase (171 aa).

His-70 is a catalytic residue.

It belongs to the thioester dehydratase family. FabA subfamily. Homodimer.

Its subcellular location is the cytoplasm. The catalysed reaction is a (3R)-hydroxyacyl-[ACP] = a (2E)-enoyl-[ACP] + H2O. It catalyses the reaction (3R)-hydroxydecanoyl-[ACP] = (2E)-decenoyl-[ACP] + H2O. The enzyme catalyses (2E)-decenoyl-[ACP] = (3Z)-decenoyl-[ACP]. The protein operates within lipid metabolism; fatty acid biosynthesis. In terms of biological role, necessary for the introduction of cis unsaturation into fatty acids. Catalyzes the dehydration of (3R)-3-hydroxydecanoyl-ACP to E-(2)-decenoyl-ACP and then its isomerization to Z-(3)-decenoyl-ACP. Can catalyze the dehydratase reaction for beta-hydroxyacyl-ACPs with saturated chain lengths up to 16:0, being most active on intermediate chain length. In Nitrosococcus oceani (strain ATCC 19707 / BCRC 17464 / JCM 30415 / NCIMB 11848 / C-107), this protein is 3-hydroxydecanoyl-[acyl-carrier-protein] dehydratase.